Reading from the N-terminus, the 159-residue chain is Transcription elongation factor GreA (159 aa).

This sequence belongs to the GreA/GreB family.

Its function is as follows. Necessary for efficient RNA polymerase transcription elongation past template-encoded arresting sites. The arresting sites in DNA have the property of trapping a certain fraction of elongating RNA polymerases that pass through, resulting in locked ternary complexes. Cleavage of the nascent transcript by cleavage factors such as GreA or GreB allows the resumption of elongation from the new 3'terminus. GreA releases sequences of 2 to 3 nucleotides. The sequence is that of Transcription elongation factor GreA from Buchnera aphidicola subsp. Baizongia pistaciae (strain Bp).